Here is a 250-residue protein sequence, read N- to C-terminus: tRNA (guanine-N(1)-)-methyltransferase (250 aa).

Residues glycine 114 and isoleucine 134 to leucine 139 contribute to the S-adenosyl-L-methionine site.

The protein belongs to the RNA methyltransferase TrmD family. As to quaternary structure, homodimer.

Its subcellular location is the cytoplasm. It catalyses the reaction guanosine(37) in tRNA + S-adenosyl-L-methionine = N(1)-methylguanosine(37) in tRNA + S-adenosyl-L-homocysteine + H(+). Its function is as follows. Specifically methylates guanosine-37 in various tRNAs. This is tRNA (guanine-N(1)-)-methyltransferase from Moorella thermoacetica (strain ATCC 39073 / JCM 9320).